The primary structure comprises 90 residues: Probable Fe(2+)-trafficking protein (90 aa).

This sequence belongs to the Fe(2+)-trafficking protein family.

In terms of biological role, could be a mediator in iron transactions between iron acquisition and iron-requiring processes, such as synthesis and/or repair of Fe-S clusters in biosynthetic enzymes. This chain is Probable Fe(2+)-trafficking protein, found in Paracidovorax citrulli (strain AAC00-1) (Acidovorax citrulli).